The chain runs to 332 residues: 2-oxoglutarate-dependent dioxygenase FG08081 (332 aa).

The Fe2OG dioxygenase domain occupies Arg176–Ala280. Fe cation is bound by residues His201, Asp203, and His258. Arg271 is a binding site for 2-oxoglutarate.

This sequence belongs to the iron/ascorbate-dependent oxidoreductase family. Requires Fe(2+) as cofactor.

The protein operates within mycotoxin biosynthesis. 2-oxoglutarate-dependent dioxygenase; part of the gene cluster that mediates the biosynthesis of butenolide, a mycotoxin that shows antibiotic activity but does not seem to play a major role in the spread of head blight in wheat. Butenolide is derived from glutamic acid via a 4-acetamido-2-butenoic acid intermediate. The predicted function of the NADH:flavin oxidoreductase FG08077, the cytochrome P450 monooxygenase FG08079, the decarboxylase FG08083, and the putative acetyltransferase FG08082 are consistent with this pathway, however, the respective activities of the butelonide biosynthesis cluster enzymes have still to be experimentally determined. The sequence is that of 2-oxoglutarate-dependent dioxygenase FG08081 from Gibberella zeae (strain ATCC MYA-4620 / CBS 123657 / FGSC 9075 / NRRL 31084 / PH-1) (Wheat head blight fungus).